The chain runs to 66 residues: Large ribosomal subunit protein bL35 (66 aa).

Residues 1 to 16 (MPKQKTHRASAKRFKR) show a composition bias toward basic residues. The segment at 1-20 (MPKQKTHRASAKRFKRTGNG) is disordered.

It belongs to the bacterial ribosomal protein bL35 family.

This chain is Large ribosomal subunit protein bL35, found in Lactococcus lactis subsp. lactis (strain IL1403) (Streptococcus lactis).